A 245-amino-acid polypeptide reads, in one-letter code: Probable phosphatase YcdX (245 aa).

Zn(2+) contacts are provided by H7, H9, H15, H40, E73, H101, H131, D192, and H194.

This sequence belongs to the PHP family. In terms of assembly, homotrimer. Zn(2+) is required as a cofactor.

The protein is Probable phosphatase YcdX of Escherichia fergusonii (strain ATCC 35469 / DSM 13698 / CCUG 18766 / IAM 14443 / JCM 21226 / LMG 7866 / NBRC 102419 / NCTC 12128 / CDC 0568-73).